We begin with the raw amino-acid sequence, 360 residues long: uncharacterized protein (360 aa).

4 to 22 contributes to the NAD(+) binding site; sequence KVLHIGAGGFGERWCDTFL.

Functionally, could be a NAD-dependent oxidoreductase. This is an uncharacterized protein from Sinorhizobium fredii (strain NBRC 101917 / NGR234).